Reading from the N-terminus, the 712-residue chain is Lactoperoxidase (712 aa).

Residues 1 to 22 (MWVCLQLPVFLASVTLFEVAAS) form the signal peptide. The propeptide occupies 23 to 100 (DTIAQAASTT…WEESLKRLRR (78 aa)). N-linked (GlcNAc...) asparagine glycosylation is present at Asn-106. Disulfide bonds link Cys-123/Cys-284, Cys-132/Cys-145, Cys-246/Cys-256, and Cys-250/Cys-274. Residue Asn-212 is glycosylated (N-linked (GlcNAc...) asparagine). Asp-225 is a heme b binding site. Catalysis depends on His-226, which acts as the Proton acceptor. Asp-227 contributes to the Ca(2+) binding site. The Ca(2+) site is built by Thr-301, Phe-303, Asp-305, and Ser-307. Ser-315 is modified (phosphoserine). N-linked (GlcNAc...) asparagine glycosylation is found at Asn-322 and Asn-358. Cysteines 354 and 365 form a disulfide. Residue Glu-375 participates in heme b binding. An N-linked (GlcNAc...) asparagine glycan is attached at Asn-449. His-468 serves as a coordination point for heme b. Position 482 is a 3'-nitrotyrosine (Tyr-482). 2 disulfides stabilise this stretch: Cys-573-Cys-630 and Cys-671-Cys-696.

It belongs to the peroxidase family. XPO subfamily. It depends on Ca(2+) as a cofactor. Heme b is required as a cofactor. Mammary gland; milk.

The protein localises to the secreted. It is found in the cytoplasm. It catalyses the reaction 2 a phenolic donor + H2O2 = 2 a phenolic radical donor + 2 H2O. The enzyme catalyses thiocyanate + H2O2 + H(+) = hypothiocyanous acid + H2O. The catalysed reaction is iodide + H2O2 = hypoiodite + H2O. Functionally, heme-containing oxidoreductase which catalyzes the conversion of thiocyanate (SCN(-)) into antimicrobial agent hypothiocyanous acid (OSCN(-)) in the presence of hydrogen peroxide (H2O2). Also involved in the conversion of iodide (I(-)) into hypoiodite (IO(-)) in the presence of H2O2. Responsible for the inactivation of a wide range of micro-organisms and hence, important component of defense mechanism. The lactoperoxidase-SCN(-)-H2O2 system shows antibacterial properties against some streptococci strains. The lactoperoxidase-I(-)-H2O2 system shows antibacterial properties against E.coli. May protect the udder from infection and may promote growth in newborns. May be implicated in airway host defense against infection. May contribute to maintaining an appropriate H2O2 cellular level, therefore protecting cells from H2O2-caused injuries and inflammation. This Bos taurus (Bovine) protein is Lactoperoxidase (LPO).